We begin with the raw amino-acid sequence, 987 residues long: Transposase for transposon Tn4430 (987 aa).

The protein belongs to the transposase 7 family.

In terms of biological role, required for transposition of transposon Tn4430. This chain is Transposase for transposon Tn4430 (tnpA), found in Bacillus thuringiensis.